The primary structure comprises 206 residues: Pyridoxal 5'-phosphate synthase subunit PdxT (206 aa).

Residue 59-61 participates in L-glutamine binding; that stretch reads GES. Cysteine 91 functions as the Nucleophile in the catalytic mechanism. L-glutamine-binding positions include arginine 123 and 151–152; that span reads IR. Residues histidine 187 and glutamate 189 each act as charge relay system in the active site.

It belongs to the glutaminase PdxT/SNO family. In the presence of PdxS, forms a dodecamer of heterodimers. Only shows activity in the heterodimer.

The catalysed reaction is aldehydo-D-ribose 5-phosphate + D-glyceraldehyde 3-phosphate + L-glutamine = pyridoxal 5'-phosphate + L-glutamate + phosphate + 3 H2O + H(+). It catalyses the reaction L-glutamine + H2O = L-glutamate + NH4(+). It functions in the pathway cofactor biosynthesis; pyridoxal 5'-phosphate biosynthesis. Its function is as follows. Catalyzes the hydrolysis of glutamine to glutamate and ammonia as part of the biosynthesis of pyridoxal 5'-phosphate. The resulting ammonia molecule is channeled to the active site of PdxS. This chain is Pyridoxal 5'-phosphate synthase subunit PdxT, found in Mycobacterium sp. (strain KMS).